The following is a 222-amino-acid chain: CEACAM1-like protein UL7 (222 aa).

N-linked (GlcNAc...) asparagine; by host glycans are attached at residues Asn-50, Asn-56, Asn-60, Asn-71, Asn-105, Asn-109, Asn-125, Asn-132, Asn-147, Asn-164, Asn-168, and Asn-189. Residues 193-213 traverse the membrane as a helical segment; that stretch reads LALVGVVVFLVLIVVCIMGWW.

Belongs to the RL11 family. Post-translationally, highly glycosylated.

The protein resides in the secreted. The protein localises to the host cell membrane. Its function is as follows. Plays a role in modulating the host immune response and affecting host cytokine production. Structurally and functionally homolog of host CEACAM1, induces endothelial cell angiogenesis. The chain is CEACAM1-like protein UL7 (UL7) from Homo sapiens (Human).